The following is a 135-amino-acid chain: Transcription antitermination protein NusB (135 aa).

The protein belongs to the NusB family.

Functionally, involved in transcription antitermination. Required for transcription of ribosomal RNA (rRNA) genes. Binds specifically to the boxA antiterminator sequence of the ribosomal RNA (rrn) operons. The protein is Transcription antitermination protein NusB of Shewanella piezotolerans (strain WP3 / JCM 13877).